The sequence spans 134 residues: uncharacterized protein (134 aa).

An N-terminal signal peptide occupies residues M1–A16.

This is an uncharacterized protein from Oryza sativa subsp. indica (Rice).